Consider the following 135-residue polypeptide: Ribonuclease P protein component 2 (135 aa).

This sequence belongs to the eukaryotic/archaeal RNase P protein component 2 family. As to quaternary structure, consists of a catalytic RNA component and at least 4-5 protein subunits.

The protein localises to the cytoplasm. The enzyme catalyses Endonucleolytic cleavage of RNA, removing 5'-extranucleotides from tRNA precursor.. In terms of biological role, part of ribonuclease P, a protein complex that generates mature tRNA molecules by cleaving their 5'-ends. In Methanosarcina barkeri (strain Fusaro / DSM 804), this protein is Ribonuclease P protein component 2.